The chain runs to 201 residues: Probable nicotinate-nucleotide adenylyltransferase (201 aa).

Belongs to the NadD family.

The catalysed reaction is nicotinate beta-D-ribonucleotide + ATP + H(+) = deamido-NAD(+) + diphosphate. It functions in the pathway cofactor biosynthesis; NAD(+) biosynthesis; deamido-NAD(+) from nicotinate D-ribonucleotide: step 1/1. Its function is as follows. Catalyzes the reversible adenylation of nicotinate mononucleotide (NaMN) to nicotinic acid adenine dinucleotide (NaAD). The protein is Probable nicotinate-nucleotide adenylyltransferase of Clostridium botulinum (strain Kyoto / Type A2).